A 388-amino-acid chain; its full sequence is Chorismate synthase (388 aa).

Residues R39 and R45 each coordinate NADP(+). FMN is bound by residues 130–132, 251–252, G296, 311–315, and R337; these read RSS, NA, and KPIPT.

This sequence belongs to the chorismate synthase family. In terms of assembly, homotetramer. It depends on FMNH2 as a cofactor.

The enzyme catalyses 5-O-(1-carboxyvinyl)-3-phosphoshikimate = chorismate + phosphate. Its pathway is metabolic intermediate biosynthesis; chorismate biosynthesis; chorismate from D-erythrose 4-phosphate and phosphoenolpyruvate: step 7/7. Its function is as follows. Catalyzes the anti-1,4-elimination of the C-3 phosphate and the C-6 proR hydrogen from 5-enolpyruvylshikimate-3-phosphate (EPSP) to yield chorismate, which is the branch point compound that serves as the starting substrate for the three terminal pathways of aromatic amino acid biosynthesis. This reaction introduces a second double bond into the aromatic ring system. The polypeptide is Chorismate synthase (Streptococcus pyogenes serotype M1).